Here is a 575-residue protein sequence, read N- to C-terminus: Hemagglutinin-neuraminidase (575 aa).

Basic and acidic residues predominate over residues 1–10 (MDGDRGKRDS). Residues 1–27 (MDGDRGKRDSYWSTSPSGSTTKPASGW) form a disordered region. Over 1-37 (MDGDRGKRDSYWSTSPSGSTTKPASGWERSSKADTWL) the chain is Intravirion. The segment at 10–14 (SYWST) is incorporation in virion. The span at 11-23 (YWSTSPSGSTTKP) shows a compositional bias: polar residues. Residues 38–58 (LILSFTQWALSIATVIICIII) form a helical; Signal-anchor for type II membrane protein membrane-spanning segment. Positions 59–140 (SARQGYSMKE…RQELTQHCES (82 aa)) are interaction with F protein. The Virion surface portion of the chain corresponds to 59-575 (SARQGYSMKE…SIPKLCKAES (517 aa)). A glycan (N-linked (GlcNAc...) asparagine; by host) is linked at Asn77. 4 disulfides stabilise this stretch: Cys192-Cys216, Cys258-Cys271, Cys357-Cys469, and Cys463-Cys473. The involved in neuraminidase activity stretch occupies residues 254-259 (NRKSCS). 2 N-linked (GlcNAc...) asparagine; by host glycosylation sites follow: Asn499 and Asn511. Cys535 and Cys544 are disulfide-bonded.

Belongs to the paramyxoviruses hemagglutinin-neuraminidase family. As to quaternary structure, homotetramer; composed of disulfide-linked homodimers. Interacts with F protein trimer. In terms of processing, N-glycosylated; glycans consist of a mixture of high mannose-type oligosaccharides and of complex-type oligosaccharides.

It is found in the virion membrane. The protein resides in the host cell membrane. It catalyses the reaction Hydrolysis of alpha-(2-&gt;3)-, alpha-(2-&gt;6)-, alpha-(2-&gt;8)- glycosidic linkages of terminal sialic acid residues in oligosaccharides, glycoproteins, glycolipids, colominic acid and synthetic substrates.. Attaches the virus to sialic acid-containing cell receptors and thereby initiating infection. Binding of HN protein to the receptor induces a conformational change that allows the F protein to trigger virion/cell membranes fusion. Its function is as follows. Neuraminidase activity ensures the efficient spread of the virus by dissociating the mature virions from the neuraminic acid containing glycoproteins. This chain is Hemagglutinin-neuraminidase (HN), found in Sendai virus (strain Z) (SeV).